The following is a 315-amino-acid chain: Cytosolic Fe-S cluster assembly factor nubp1-A (315 aa).

Residues 1-23 (MADIPDNAPQHCPGTDSTEAGKS) are disordered. The [4Fe-4S] cluster site is built by cysteine 12, cysteine 26, cysteine 29, and cysteine 35. 66–73 (GKGGVGKS) contacts ATP. Residues cysteine 239 and cysteine 242 each coordinate [4Fe-4S] cluster.

The protein belongs to the Mrp/NBP35 ATP-binding proteins family. NUBP1/NBP35 subfamily. In terms of assembly, heterotetramer of 2 nubp1 and 2 nubp2 chains. Requires [4Fe-4S] cluster as cofactor.

The protein localises to the cytoplasm. Its function is as follows. Component of the cytosolic iron-sulfur (Fe/S) protein assembly (CIA) machinery. Required for maturation of extramitochondrial Fe-S proteins. The nubp1-nubp2 heterotetramer forms a Fe-S scaffold complex, mediating the de novo assembly of an Fe-S cluster and its transfer to target apoproteins. The sequence is that of Cytosolic Fe-S cluster assembly factor nubp1-A (nubp1-A) from Xenopus laevis (African clawed frog).